A 461-amino-acid polypeptide reads, in one-letter code: Signal recognition particle receptor FtsY (461 aa).

The TPR repeat unit spans residues 105–138 (FESLYNVAKIYHQLEKPDKALEYAQRAEKLVPYE). GTP contacts are provided by residues 267-274 (GVNGSGKT), 349-353 (DTAGR), and 413-416 (TKLD).

This sequence belongs to the GTP-binding SRP family. FtsY subfamily. In terms of assembly, part of the signal recognition particle protein translocation system, which is composed of SRP and FtsY.

The protein resides in the cell inner membrane. Its subcellular location is the cytoplasm. It carries out the reaction GTP + H2O = GDP + phosphate + H(+). Involved in targeting and insertion of nascent membrane proteins into the cytoplasmic membrane. Acts as a receptor for the complex formed by the signal recognition particle (SRP) and the ribosome-nascent chain (RNC). In Aquifex aeolicus (strain VF5), this protein is Signal recognition particle receptor FtsY.